Reading from the N-terminus, the 481-residue chain is Palmitoyltransferase PFA4 (481 aa).

Residues 1–22 form a disordered region; sequence MTNQDPDDGAYPSSQSDDDGIE. At 1–66 the chain is on the cytoplasmic side; the sequence is MTNQDPDDGA…APLTGRRRTP (66 aa). A helical transmembrane segment spans residues 67 to 87; it reads LSWTEVIWVSLTLLLIAVLGY. At 88 to 108 the chain is on the lumenal side; it reads SSQLYVMLPYYEKTPSFSPQA. A helical membrane pass occupies residues 109 to 129; that stretch reads LAAVLVPFNLGLLAIYYNYWL. The Cytoplasmic portion of the chain corresponds to 130-223; that stretch reads CVTTDAGSVP…LANCVGHFNH (94 aa). The DHHC domain maps to 181-231; the sequence is RYCKTCSAFKPPRSHHCKTCQRCVLRMDHHCPWLANCVGHFNHAHFIRFLF. The S-palmitoyl cysteine intermediate role is filled by cysteine 211. The helical transmembrane segment at 224–244 threads the bilayer; that stretch reads AHFIRFLFYVDVTCLYHLIMI. Over 245 to 265 the chain is Lumenal; that stretch reads SCRVLDSFNSYTYWREPCARE. A helical membrane pass occupies residues 266 to 286; that stretch reads LVWLVVNYALCIPVILLVGIF. Residues 287-481 are Cytoplasmic-facing; the sequence is SLYHFYCLAV…EVRPHTPWSV (195 aa). Residues 370-481 form a disordered region; the sequence is SQYRWPPKDP…EVRPHTPWSV (112 aa). Residues 418-431 are compositionally biased toward low complexity; that stretch reads SSPSSSDSHSSLHL. Basic and acidic residues-rich tracts occupy residues 441 to 452 and 466 to 475; these read LPHHFDPPHDPD and RGSEGYEVRP.

Belongs to the DHHC palmitoyltransferase family. PFA4 subfamily.

The protein localises to the endoplasmic reticulum membrane. The catalysed reaction is L-cysteinyl-[protein] + hexadecanoyl-CoA = S-hexadecanoyl-L-cysteinyl-[protein] + CoA. Mediates the reversible addition of palmitate to target proteins, thereby regulating their membrane association and biological function. This is Palmitoyltransferase PFA4 from Mycosarcoma maydis (Corn smut fungus).